The chain runs to 284 residues: Bifunctional protein FolD (284 aa).

NADP(+) is bound by residues Gly165–Ser167 and Ser190.

It belongs to the tetrahydrofolate dehydrogenase/cyclohydrolase family. As to quaternary structure, homodimer.

It catalyses the reaction (6R)-5,10-methylene-5,6,7,8-tetrahydrofolate + NADP(+) = (6R)-5,10-methenyltetrahydrofolate + NADPH. The catalysed reaction is (6R)-5,10-methenyltetrahydrofolate + H2O = (6R)-10-formyltetrahydrofolate + H(+). Its pathway is one-carbon metabolism; tetrahydrofolate interconversion. Catalyzes the oxidation of 5,10-methylenetetrahydrofolate to 5,10-methenyltetrahydrofolate and then the hydrolysis of 5,10-methenyltetrahydrofolate to 10-formyltetrahydrofolate. This chain is Bifunctional protein FolD, found in Streptococcus sanguinis (strain SK36).